Here is a 382-residue protein sequence, read N- to C-terminus: Queuine tRNA-ribosyltransferase (382 aa).

Residue aspartate 89 is the Proton acceptor of the active site. Substrate is bound by residues 89 to 93 (DSGGF), aspartate 143, glutamine 187, and glycine 214. Residues 245–251 (GVGKPED) are RNA binding. Aspartate 264 (nucleophile) is an active-site residue. Residues 269–273 (TRNAR) form an RNA binding; important for wobble base 34 recognition region. Residues cysteine 302, cysteine 304, cysteine 307, and histidine 333 each coordinate Zn(2+).

Belongs to the queuine tRNA-ribosyltransferase family. As to quaternary structure, homodimer. Within each dimer, one monomer is responsible for RNA recognition and catalysis, while the other monomer binds to the replacement base PreQ1. Zn(2+) serves as cofactor.

It catalyses the reaction 7-aminomethyl-7-carbaguanine + guanosine(34) in tRNA = 7-aminomethyl-7-carbaguanosine(34) in tRNA + guanine. Its pathway is tRNA modification; tRNA-queuosine biosynthesis. In terms of biological role, catalyzes the base-exchange of a guanine (G) residue with the queuine precursor 7-aminomethyl-7-deazaguanine (PreQ1) at position 34 (anticodon wobble position) in tRNAs with GU(N) anticodons (tRNA-Asp, -Asn, -His and -Tyr). Catalysis occurs through a double-displacement mechanism. The nucleophile active site attacks the C1' of nucleotide 34 to detach the guanine base from the RNA, forming a covalent enzyme-RNA intermediate. The proton acceptor active site deprotonates the incoming PreQ1, allowing a nucleophilic attack on the C1' of the ribose to form the product. After dissociation, two additional enzymatic reactions on the tRNA convert PreQ1 to queuine (Q), resulting in the hypermodified nucleoside queuosine (7-(((4,5-cis-dihydroxy-2-cyclopenten-1-yl)amino)methyl)-7-deazaguanosine). This chain is Queuine tRNA-ribosyltransferase, found in Sodalis glossinidius (strain morsitans).